The primary structure comprises 580 residues: FAD-dependent monooxygenase DEP4 (580 aa).

An FAD-binding site is contributed by V47–K50. F58–Q60 contacts NADP(+). V112 provides a ligand contact to FAD. NADP(+)-binding positions include V186–K205, A222–P223, and D354–I355. M473 contacts FAD.

This sequence belongs to the FAD-binding monooxygenase family. It depends on FAD as a cofactor.

It functions in the pathway polyketide biosynthesis. Part of the gene cluster that mediates the biosynthesis of depudecin, a highly oxidized eleven-carbon linear polyketide that acts as a histone deacetylase (HDAC) inhibitor and makes a small contribution to pathogenesis. The reducing polyketide synthase DEP5 is the central enzyme in depudecin biosynthesis by yielding the backbone polyketide chain. The monooxygenases DEP2 and DEP4, as well as the uncharacterized protein DEP1, then act as tailoring enzymes to modify the intermediate polyketide chain into depudecin. This is FAD-dependent monooxygenase DEP4 from Fusarium langsethiae.